Consider the following 101-residue polypeptide: Small ribosomal subunit protein uS14 (101 aa).

Belongs to the universal ribosomal protein uS14 family. As to quaternary structure, part of the 30S ribosomal subunit. Contacts proteins S3 and S10.

Its function is as follows. Binds 16S rRNA, required for the assembly of 30S particles and may also be responsible for determining the conformation of the 16S rRNA at the A site. The chain is Small ribosomal subunit protein uS14 from Synechococcus sp. (strain JA-3-3Ab) (Cyanobacteria bacterium Yellowstone A-Prime).